A 155-amino-acid chain; its full sequence is Medium/long-chain acyl-CoA thioesterase YigI (155 aa).

The protein belongs to the YigI thioesterase family.

The protein localises to the cytoplasm. It catalyses the reaction a fatty acyl-CoA + H2O = a fatty acid + CoA + H(+). The catalysed reaction is a medium-chain fatty acyl-CoA + H2O = a medium-chain fatty acid + CoA + H(+). The enzyme catalyses a long-chain fatty acyl-CoA + H2O = a long-chain fatty acid + CoA + H(+). Displays thioesterase activity against medium- to long-chain acyl-CoA substrates. Is involved in the thioesterase-dependent beta-oxidation pathway of (9Z,11E)-octadecadienoate (conjugated linoleic acid or CLA), along with TesB and FadM. The chain is Medium/long-chain acyl-CoA thioesterase YigI (yigI) from Shigella flexneri.